The primary structure comprises 815 residues: Phenylalanine--tRNA ligase beta subunit (815 aa).

The region spanning 39–148 is the tRNA-binding domain; sequence ATELQKFEVA…EYAVVGDNFT (110 aa). The region spanning 420–495 is the B5 domain; that stretch reads LQKIPLDFSV…RIYGYDKIES (76 aa). Mg(2+)-binding residues include aspartate 473, aspartate 479, glutamate 482, and glutamate 483. One can recognise an FDX-ACB domain in the interval 721–814; the sequence is SDFQANFRDY…ISQKFQGTLR (94 aa).

It belongs to the phenylalanyl-tRNA synthetase beta subunit family. Type 1 subfamily. As to quaternary structure, tetramer of two alpha and two beta subunits. Requires Mg(2+) as cofactor.

It is found in the cytoplasm. It catalyses the reaction tRNA(Phe) + L-phenylalanine + ATP = L-phenylalanyl-tRNA(Phe) + AMP + diphosphate + H(+). The protein is Phenylalanine--tRNA ligase beta subunit of Rickettsia typhi (strain ATCC VR-144 / Wilmington).